Reading from the N-terminus, the 54-residue chain is Putative neurotoxin-I (54 aa).

3 disulfide bridges follow: cysteine 20/cysteine 42, cysteine 28/cysteine 51, and cysteine 32/cysteine 53.

As to expression, expressed by the venom gland.

The protein localises to the secreted. This chain is Putative neurotoxin-I, found in Lychas mucronatus (Chinese swimming scorpion).